Reading from the N-terminus, the 2513-residue chain is Probable polyketide synthase 7 (2513 aa).

Residues 11–441 enclose the Ketosynthase family 3 (KS3) domain; the sequence is EKGVAIVGIG…GSNCCLLISE (431 aa). Active-site for beta-ketoacyl synthase activity residues include cysteine 181, histidine 323, and histidine 362. The tract at residues 632-665 is acyl/malonyl transferase; sequence GVNPSFILGHSLGEISASYCSGMIDLDTFCYTVY. The For acyl/malonyl transferase activity role is filled by serine 642. Residues 922–1044 are N-terminal hotdog fold; the sequence is IDHLGISNSF…SNFQLLDHGN (123 aa). The PKS/mFAS DH domain maps to 922-1206; that stretch reads IDHLGISNSF…CKSLIPIKDS (285 aa). The active-site Proton acceptor; for dehydratase activity is histidine 956. The segment at 1061-1206 is C-terminal hotdog fold; sequence NLSKLTKNEL…CKSLIPIKDS (146 aa). Aspartate 1119 (proton donor; for dehydratase activity) is an active-site residue. The region spanning 2426-2503 is the Carrier domain; it reads IGNKNIDELF…ISIKMILNSL (78 aa). Serine 2463 carries the post-translational modification O-(pantetheine 4'-phosphoryl)serine.

The cofactor is pantetheine 4'-phosphate.

In terms of biological role, probable polyketide synthase. The sequence is that of Probable polyketide synthase 7 (pks7) from Dictyostelium discoideum (Social amoeba).